The following is a 467-amino-acid chain: Argininosuccinate lyase (467 aa).

The protein belongs to the lyase 1 family. Argininosuccinate lyase subfamily.

It localises to the cytoplasm. It carries out the reaction 2-(N(omega)-L-arginino)succinate = fumarate + L-arginine. The protein operates within amino-acid biosynthesis; L-arginine biosynthesis; L-arginine from L-ornithine and carbamoyl phosphate: step 3/3. This Rhizobium etli (strain ATCC 51251 / DSM 11541 / JCM 21823 / NBRC 15573 / CFN 42) protein is Argininosuccinate lyase.